A 458-amino-acid polypeptide reads, in one-letter code: Sphingoid long chain base kinase 4 (458 aa).

One can recognise a DAGKc domain in the interval 103-241 (KRSRRFIVFI…FDLMTFEQKG (139 aa)). ATP contacts are provided by residues 113–115 (NPH) and T145. 170–173 (GGDG) contacts substrate. D172 functions as the Proton donor/acceptor in the catalytic mechanism. ATP is bound by residues E177, 202 to 204 (GSG), R266, R272, and 426 to 428 (DGE).

It is found in the cell membrane. Its subcellular location is the endoplasmic reticulum membrane. The protein resides in the late endosome membrane. The protein localises to the golgi apparatus membrane. The catalysed reaction is a sphingoid base + ATP = a sphingoid 1-phosphate + ADP + H(+). In terms of biological role, catalyzes the phosphorylation of the sphingoid long chain bases dihydrosphingosine (DHS) and phytosphingosine (PHS) to form dihydrosphingosine 1-phosphate (DHS-1P) and phytosphingosine 1-phosphate (PHS-1P) respectively. Involved in the biosynthesis of sphingolipids and ceramides. Involved in heat-induced transient cell cycle arrest. Accumulation of phosphorylated sphingoid long chain bases (LCBPs) stimulates calcium influx and activates calcineurin signaling. Involved in heat-stress resistance. The polypeptide is Sphingoid long chain base kinase 4 (lcb4) (Schizosaccharomyces pombe (strain 972 / ATCC 24843) (Fission yeast)).